We begin with the raw amino-acid sequence, 617 residues long: Syncytin-A (617 aa).

An N-terminal signal peptide occupies residues 1 to 17; that stretch reads MVRPWVFCLLLFPCSSA. Residues 18–544 lie on the Extracellular side of the membrane; it reads YSDSWMPLVN…WIQWLGLGPW (527 aa). Asn27 carries an N-linked (GlcNAc...) asparagine glycan. A CXXC motif is present at residues 44–47; the sequence is CWVC. 3 cysteine pairs are disulfide-bonded: Cys44–Cys47, Cys44–Cys505, and Cys497–Cys504. Asn272 and Asn365 each carry an N-linked (GlcNAc...) asparagine glycan. The fusion peptide stretch occupies residues 420-440; that stretch reads LLPLLAGLGIASALGLGIAGI. Positions 497-505 match the CX6CC motif; that stretch reads CLFLQEECC. The helical transmembrane segment at 545-565 threads the bilayer; the sequence is LPSWLTSLMAPILFILVLLVF. Residues 566 to 617 lie on the Cytoplasmic side of the membrane; that stretch reads RPCLLNCLTHSVSRRMSSFIHTTTEGHVDKILLLRESQYKRLPQEPPEEDAV.

Belongs to the gamma type-C retroviral envelope protein family. The mature protein consists of a trimer of SU-TM heterodimers. The SU-TM heterodimers are attached by a labile interchain disulfide bond. Post-translationally, synthesized as an inactive precursor that is heavily N-glycosylated and processed likely by furin in the Golgi to yield the mature SU and TM proteins. The cleavage site between SU and TM requires the minimal sequence [KR]-X-[KR]-R. In terms of processing, the CXXC motif is highly conserved across a broad range of retroviral envelope proteins. It is thought to participate in the formation of a labile disulfide bond possibly with the CX6CC motif present in the transmembrane protein. Isomerization of the intersubunit disulfide bond to an SU intrachain disulfide bond is thought to occur upon receptor recognition in order to allow membrane fusion. As to expression, highly expressed in placenta where it localizes to syncytiotrophoblasts of the labyrinthine zona. Specifically localizes to syncytiotrophoblast layer I (SynT-I). Also detected at very low levels in hippocampus, brain, testis and ovary.

Its subcellular location is the cell membrane. This endogenous retroviral envelope protein has retained its original fusogenic properties. Together with Synb, participates in trophoblast fusion and the formation of a syncytium during placenta morphogenesis. Syna is essential for placental development and is specifically required for formation of syncytiotrophoblast layer I (SynT-I). Promotes muscle myoblast fusion. Does not have immunosuppressive activity. The protein is Syncytin-A of Mus musculus (Mouse).